The following is a 149-amino-acid chain: HMG1/2-like protein (149 aa).

Basic and acidic residues-rich tracts occupy residues 1 to 15 (MKGG…KAET) and 35 to 44 (KGKEPKDPNK). Disordered regions lie at residues 1 to 52 (MKGG…PSAF) and 112 to 149 (AYNK…EDDD). The HMG box DNA-binding region spans 45 to 114 (PKRPPSAFFV…EYEITLQAYN (70 aa)). Positions 134–149 (NDEDEDEEDEEDEDDD) are enriched in acidic residues.

Belongs to the HMGB family.

It is found in the nucleus. The chain is HMG1/2-like protein from Vicia faba (Broad bean).